The following is a 20-amino-acid chain: Maximin-Ht (20 aa).

Belongs to the bombinin family. As to expression, expressed by the skin glands.

The protein resides in the secreted. Functionally, has antimicrobial activity. The chain is Maximin-Ht from Bombina maxima (Giant fire-bellied toad).